We begin with the raw amino-acid sequence, 287 residues long: MGIRYYRPYTAGTRQKTSSDFAEITRDRPEKSLVKAKHRAKGRNNRGVITSRRRGGGHKRRYRIIDFYRNKLGVPGTIATVEYDPNRNARIALVNYKDGEKRYILHPRNVQVGTTIVAGPDAPIEVGNALPLERIPLGTEVHNVELIPGKGGQLARAAGALAQVVAKEGKMVTLKLPSGEVRLFQKECYATIGQVGNVESNNITIGKAGRNRWKARRPKVRGSVMNPVDHPHGGGEGRAPIGRSGPVTPWGKPTLGYKTRKKKKQSNKLIVRRRRRSSKRSRGGRQS.

Basic residues-rich tracts occupy residues 209 to 220 (GRNRWKARRPKV) and 258 to 287 (KTRK…GRQS). Residues 209–287 (GRNRWKARRP…SKRSRGGRQS (79 aa)) form a disordered region.

Belongs to the universal ribosomal protein uL2 family. In terms of assembly, part of the 50S ribosomal subunit. Forms a bridge to the 30S subunit in the 70S ribosome.

In terms of biological role, one of the primary rRNA binding proteins. Required for association of the 30S and 50S subunits to form the 70S ribosome, for tRNA binding and peptide bond formation. It has been suggested to have peptidyltransferase activity; this is somewhat controversial. Makes several contacts with the 16S rRNA in the 70S ribosome. This chain is Large ribosomal subunit protein uL2, found in Acaryochloris marina (strain MBIC 11017).